We begin with the raw amino-acid sequence, 493 residues long: Lysine--tRNA ligase (493 aa).

A 'HIGH' region motif is present at residues 26–34 (PSGHIHLGN). Positions 270–274 (AMKSS) match the 'KMSKS' region motif.

It belongs to the class-I aminoacyl-tRNA synthetase family.

It localises to the cytoplasm. The enzyme catalyses tRNA(Lys) + L-lysine + ATP = L-lysyl-tRNA(Lys) + AMP + diphosphate. The sequence is that of Lysine--tRNA ligase (lysS) from Archaeoglobus fulgidus (strain ATCC 49558 / DSM 4304 / JCM 9628 / NBRC 100126 / VC-16).